The following is a 217-amino-acid chain: 25 kDa ookinete surface antigen (217 aa).

The first 16 residues, 1-16 (MNKLYSLFLFLFIQLS), serve as a signal peptide directing secretion. An EGF-like 1; truncated domain is found at 30–59 (CKKGFLIQMSGHLECKCENDLVLVNEETCE). 3 consecutive EGF-like domains span residues 61 to 106 (KVLK…NVCI), 106 to 150 (ILNE…NKCS), and 153 to 193 (GETK…STCT). 9 cysteine pairs are disulfide-bonded: C65-C80, C74-C92, C94-C105, C110-C120, C115-C133, C135-C149, C157-C168, C161-C177, and C179-C192. A glycan (N-linked (GlcNAc...) asparagine) is linked at N112. N165 and N187 each carry an N-linked (GlcNAc...) asparagine glycan. The GPI-anchor amidated serine moiety is linked to residue S196. Residues 197 to 217 (VYNILNLSLIFVLFSVCFFIM) constitute a propeptide, removed in mature form. N202 is a glycosylation site (N-linked (GlcNAc...) asparagine).

Its subcellular location is the cell membrane. In Plasmodium reichenowi, this protein is 25 kDa ookinete surface antigen.